A 450-amino-acid chain; its full sequence is MDKLELVNDGLNIIDFIQKNQKEIQKTYGRSSIQQPSIKDQTKAWEDFLQCTSGESEQVEGGMSKDDGDVERRNLEDLSSTSPTDGTIGKRVSNTRDWAEGSDDIQLDPVVTDVVYHDHGGECTGYGFTSSPERGWSDYTSGANNGNVCLVSDAKMLSYAPEIAVSKEDRETDLVHLENKLSTTGLNPTAVPFTLRNLSDPAKDSPVIAEHYYGLGVKEQNVGPQTSRNVNLDSIKLYTSDDEEADQLEFEDEFAGSSSEVIVGISPEDEEPSSVGGKPNESIGRTIEGQSIRDNLQAKDNKSTDVPGAGPKDSAVKEEPPQKRLPMLAEEFECSGSEDPIIRELLKENSLINCQQGKDAQPPYHWSIERSISPDKTEIVNGAVQTADRQRPGTPMPKSRGIPIKKGAQTRNIHLLGRKTCLGRRVVQPGMFEDHPPTKKARVSMRRMSN.

A disordered region spans residues 53–92; that stretch reads SGESEQVEGGMSKDDGDVERRNLEDLSSTSPTDGTIGKRV. Residues 63 to 76 show a composition bias toward basic and acidic residues; it reads MSKDDGDVERRNLE. Ser257 bears the Phosphoserine; by host mark. Residues 265-324 are disordered; it reads ISPEDEEPSSVGGKPNESIGRTIEGQSIRDNLQAKDNKSTDVPGAGPKDSAVKEEPPQKR. Ser350 is subject to Phosphoserine; by host. 2 disordered regions span residues 384 to 403 and 429 to 450; these read VQTA…RGIP and PGMF…RMSN. Positions 438 to 450 are enriched in basic residues; that stretch reads TKKARVSMRRMSN. A Nuclear localization signal motif is present at residues 439–442; the sequence is KKAR.

Interacts with host STAT1.

The protein localises to the host nucleus. Its function is as follows. Prevent the establishment of cellular antiviral state by blocking the interferon-alpha/beta (IFN-alpha/beta). Interacts with host STAT1 protein in the nucleus, blocking it's phosphorylation by IFN-alpha/beta. Also blocks antiviral state induced by Toll-like receptor 3/TLR3 binding to dsRNA. The sequence is that of Protein W (P/V/C) from Cynopterus brachyotis (Lesser short-nosed fruit bat).